The chain runs to 339 residues: 5-dehydro-2-deoxygluconokinase (339 aa).

The protein belongs to the carbohydrate kinase PfkB family.

The catalysed reaction is 5-dehydro-2-deoxy-D-gluconate + ATP = 6-phospho-5-dehydro-2-deoxy-D-gluconate + ADP + H(+). The protein operates within polyol metabolism; myo-inositol degradation into acetyl-CoA; acetyl-CoA from myo-inositol: step 5/7. In terms of biological role, catalyzes the phosphorylation of 5-dehydro-2-deoxy-D-gluconate (2-deoxy-5-keto-D-gluconate or DKG) to 6-phospho-5-dehydro-2-deoxy-D-gluconate (DKGP). In Clostridium botulinum (strain Alaska E43 / Type E3), this protein is 5-dehydro-2-deoxygluconokinase.